The primary structure comprises 1499 residues: Autophagy-related protein 2 (1499 aa).

Positions 211–221 are enriched in polar residues; that stretch reads EQSVPSYGSSS. Residues 211–237 form a disordered region; the sequence is EQSVPSYGSSSSDKEDDNTSDSEDPLS. The span at 224-234 shows a compositional bias: acidic residues; sequence KEDDNTSDSED.

Belongs to the ATG2 family.

Its subcellular location is the preautophagosomal structure membrane. The protein resides in the endoplasmic reticulum membrane. It carries out the reaction a 1,2-diacyl-sn-glycero-3-phosphocholine(in) = a 1,2-diacyl-sn-glycero-3-phosphocholine(out). The enzyme catalyses a 1,2-diacyl-sn-glycero-3-phospho-L-serine(in) = a 1,2-diacyl-sn-glycero-3-phospho-L-serine(out). It catalyses the reaction a 1,2-diacyl-sn-glycero-3-phosphoethanolamine(in) = a 1,2-diacyl-sn-glycero-3-phosphoethanolamine(out). Functionally, lipid transfer protein required for autophagosome completion and peroxisome degradation. Tethers the edge of the isolation membrane (IM) to the endoplasmic reticulum (ER) and mediates direct lipid transfer from ER to IM for IM expansion. ATG2 binds to the ER exit site (ERES), which is the membrane source for autophagosome formation, using basic residues in its N-terminal region (NR) and to the expanding edge of the IM through its C-terminal region. The latter binding is assisted by an ATG18-PtdIns3P interaction. ATG2 then extracts phospholipids from the membrane source using its NR and transfers them to ATG9 to the IM through its predicted beta-sheet-rich structure for membrane expansion. This is Autophagy-related protein 2 from Kluyveromyces marxianus (strain DMKU3-1042 / BCC 29191 / NBRC 104275) (Yeast).